A 347-amino-acid polypeptide reads, in one-letter code: GMP reductase (347 aa).

108-131 (ADFEKTKQILDLNPALNFVCIDVA) contributes to the NADP(+) binding site. K(+) is bound by residues glycine 181 and glycine 183. Cysteine 186 acts as the Thioimidate intermediate in catalysis. 216–239 (IISDGGCTTPGDVAKAFGGGADFV) contributes to the NADP(+) binding site.

The protein belongs to the IMPDH/GMPR family. GuaC type 1 subfamily. In terms of assembly, homotetramer.

It catalyses the reaction IMP + NH4(+) + NADP(+) = GMP + NADPH + 2 H(+). Catalyzes the irreversible NADPH-dependent deamination of GMP to IMP. It functions in the conversion of nucleobase, nucleoside and nucleotide derivatives of G to A nucleotides, and in maintaining the intracellular balance of A and G nucleotides. The chain is GMP reductase from Escherichia coli O157:H7.